The following is a 250-amino-acid chain: 5-oxoprolinase subunit A (250 aa).

The protein belongs to the LamB/PxpA family. Forms a complex composed of PxpA, PxpB and PxpC.

The catalysed reaction is 5-oxo-L-proline + ATP + 2 H2O = L-glutamate + ADP + phosphate + H(+). In terms of biological role, catalyzes the cleavage of 5-oxoproline to form L-glutamate coupled to the hydrolysis of ATP to ADP and inorganic phosphate. The chain is 5-oxoprolinase subunit A from Streptomyces griseus subsp. griseus (strain JCM 4626 / CBS 651.72 / NBRC 13350 / KCC S-0626 / ISP 5235).